We begin with the raw amino-acid sequence, 141 residues long: Small ribosomal subunit protein uS19 (141 aa).

It belongs to the universal ribosomal protein uS19 family.

In terms of biological role, protein S19 forms a complex with S13 that binds strongly to the 16S ribosomal RNA. The chain is Small ribosomal subunit protein uS19 from Thermofilum pendens (strain DSM 2475 / Hrk 5).